We begin with the raw amino-acid sequence, 1051 residues long: Kinesin-like protein KIN-4B (1051 aa).

Positions 1–21 are disordered; that stretch reads MESHSSLSSSSSSSPPSSLSS. The Kinesin motor domain occupies 25–380; it reads CVKVAVNVRP…LKYANRARNI (356 aa). Residue 104–111 participates in ATP binding; sequence GQTGSGKT. 2 coiled-coil regions span residues 414-448 and 540-644; these read ATSS…RSKR and RQHF…KMKQ. Low complexity predominate over residues 916–925; that stretch reads SSSYSGSSRS. Disordered stretches follow at residues 916-946 and 1029-1051; these read SSSY…SSTY and MSKS…FQGA.

It belongs to the TRAFAC class myosin-kinesin ATPase superfamily. Kinesin family. KIN-4 subfamily. As to quaternary structure, homodimer.

Its function is as follows. Kinesin-like motor protein involved in the control of the oriented deposition of cellulose microfibrils. The protein is Kinesin-like protein KIN-4B of Arabidopsis thaliana (Mouse-ear cress).